Reading from the N-terminus, the 550-residue chain is Gamma-aminobutyric acid receptor subunit beta (550 aa).

The N-terminal stretch at Met1–Cys24 is a signal peptide. Over Gln25–Phe264 the chain is Extracellular. 6 N-linked (GlcNAc...) asparagine glycosylation sites follow: Asn26, Asn32, Asn33, Asn45, Asn53, and Asn193. A disulfide bridge connects residues Cys180 and Cys194. Helical transmembrane passes span Ile265–Ile285, Ala292–Val311, and Ile324–Ala344. The Cytoplasmic portion of the chain corresponds to Val345–Arg527. A disordered region spans residues Ala405 to His465. Over residues Met406–Thr421 the composition is skewed to polar residues. A helical transmembrane segment spans residues Val528–Val548.

The protein belongs to the ligand-gated ion channel (TC 1.A.9) family. Gamma-aminobutyric acid receptor (TC 1.A.9.5) subfamily.

It localises to the postsynaptic cell membrane. The protein resides in the cell membrane. In terms of biological role, GABA, an inhibitory neurotransmitter, mediates neuronal inhibition by binding to the GABA receptor and opening an integral chloride channel. This chain is Gamma-aminobutyric acid receptor subunit beta (gab-1), found in Caenorhabditis elegans.